The primary structure comprises 353 residues: D-alanine--D-alanine ligase (353 aa).

An ATP-grasp domain is found at 141 to 349 (KAALAGAGLA…LEQLVHELLE (209 aa)). 176–231 (ESGLCYPCFIKPANLGSSVGISKARNREELIHGLRLAATLDPRLVVEQGVQARELE) serves as a coordination point for ATP. The Mg(2+) site is built by aspartate 302, glutamate 316, and asparagine 318.

This sequence belongs to the D-alanine--D-alanine ligase family. Mg(2+) is required as a cofactor. It depends on Mn(2+) as a cofactor.

It is found in the cytoplasm. The catalysed reaction is 2 D-alanine + ATP = D-alanyl-D-alanine + ADP + phosphate + H(+). Its pathway is cell wall biogenesis; peptidoglycan biosynthesis. Functionally, cell wall formation. The sequence is that of D-alanine--D-alanine ligase from Parasynechococcus marenigrum (strain WH8102).